The primary structure comprises 84 residues: RNA-binding protein Hfq (84 aa).

Positions 9–69 constitute a Sm domain; it reads DRFLNILRTN…VSTIMPESFV (61 aa).

Belongs to the Hfq family. In terms of assembly, homohexamer.

In terms of biological role, RNA chaperone that binds small regulatory RNA (sRNAs) and mRNAs to facilitate mRNA translational regulation in response to envelope stress, environmental stress and changes in metabolite concentrations. Also binds with high specificity to tRNAs. In Thermosipho africanus (strain TCF52B), this protein is RNA-binding protein Hfq.